The sequence spans 420 residues: Putative competence-damage inducible protein (420 aa).

The protein belongs to the CinA family.

This is Putative competence-damage inducible protein from Halalkalibacterium halodurans (strain ATCC BAA-125 / DSM 18197 / FERM 7344 / JCM 9153 / C-125) (Bacillus halodurans).